Here is a 178-residue protein sequence, read N- to C-terminus: Anthranilate synthase component 2 (178 aa).

Residues 1 to 178 enclose the Glutamine amidotransferase type-1 domain; the sequence is MIVVVDCKDS…RNFVEMCHDG (178 aa). 49–51 provides a ligand contact to L-glutamine; it reads GPG. Cys-71 (nucleophile; for GATase activity) is an active-site residue. Residues Gln-75 and 120-121 each bind L-glutamine; that span reads SL. Catalysis depends on for GATase activity residues His-155 and Glu-157.

As to quaternary structure, heterotetramer consisting of two non-identical subunits: a beta subunit (TrpG) and a large alpha subunit (TrpE).

It catalyses the reaction chorismate + L-glutamine = anthranilate + pyruvate + L-glutamate + H(+). The protein operates within amino-acid biosynthesis; L-tryptophan biosynthesis; L-tryptophan from chorismate: step 1/5. Part of a heterotetrameric complex that catalyzes the two-step biosynthesis of anthranilate, an intermediate in the biosynthesis of L-tryptophan. In the first step, the glutamine-binding beta subunit (TrpG) of anthranilate synthase (AS) provides the glutamine amidotransferase activity which generates ammonia as a substrate that, along with chorismate, is used in the second step, catalyzed by the large alpha subunit of AS (TrpE) to produce anthranilate. In the absence of TrpG, TrpE can synthesize anthranilate directly from chorismate and high concentrations of ammonia. This chain is Anthranilate synthase component 2 (trpG), found in Archaeoglobus fulgidus (strain ATCC 49558 / DSM 4304 / JCM 9628 / NBRC 100126 / VC-16).